The chain runs to 86 residues: Large ribosomal subunit protein bL31B (86 aa).

The protein belongs to the bacterial ribosomal protein bL31 family. Type B subfamily. In terms of assembly, part of the 50S ribosomal subunit.

This Streptococcus equi subsp. equi (strain 4047) protein is Large ribosomal subunit protein bL31B.